The primary structure comprises 220 residues: Adenylate kinase (220 aa).

Position 10 to 15 (10 to 15 (GAGKGT)) interacts with ATP. An NMP region spans residues 30-59 (STGDMLRAAVKAGTPLGLKAKEVMDGGNLV). AMP-binding positions include Thr-31, Arg-36, 57–59 (NLV), 85–88 (GFPR), and Gln-92. Residues 122–159 (GRRVHPASGRTYHIRFNPPQTAGMDDETGEPLVQRADD) form an LID region. ATP is bound by residues Arg-123 and 132-133 (TY). Positions 156 and 167 each coordinate AMP. Gly-205 is an ATP binding site.

Belongs to the adenylate kinase family. Monomer.

It localises to the cytoplasm. It carries out the reaction AMP + ATP = 2 ADP. It participates in purine metabolism; AMP biosynthesis via salvage pathway; AMP from ADP: step 1/1. Catalyzes the reversible transfer of the terminal phosphate group between ATP and AMP. Plays an important role in cellular energy homeostasis and in adenine nucleotide metabolism. The sequence is that of Adenylate kinase from Chlorobium luteolum (strain DSM 273 / BCRC 81028 / 2530) (Pelodictyon luteolum).